A 287-amino-acid chain; its full sequence is 4-hydroxybenzoate octaprenyltransferase (287 aa).

Transmembrane regions (helical) follow at residues 30–50, 89–109, 133–153, 158–178, 199–221, and 267–287; these read ALWIASDGHPTWPLLVIFTVG, WEAVALAAALSLLAFLLILPL, FFAIPQAYLGIAFGFGIPMAF, GHVPLLAWVMLLANVFWSVAY, ALTFGRFDVAAIMICYAATLGIY, and NNWLGGALFVGIAAHYAAGSF.

It belongs to the UbiA prenyltransferase family. Mg(2+) is required as a cofactor.

It localises to the cell inner membrane. The catalysed reaction is all-trans-octaprenyl diphosphate + 4-hydroxybenzoate = 4-hydroxy-3-(all-trans-octaprenyl)benzoate + diphosphate. It participates in cofactor biosynthesis; ubiquinone biosynthesis. Functionally, catalyzes the prenylation of para-hydroxybenzoate (PHB) with an all-trans polyprenyl group. Mediates the second step in the final reaction sequence of ubiquinone-8 (UQ-8) biosynthesis, which is the condensation of the polyisoprenoid side chain with PHB, generating the first membrane-bound Q intermediate 3-octaprenyl-4-hydroxybenzoate. The protein is 4-hydroxybenzoate octaprenyltransferase of Paraburkholderia phytofirmans (strain DSM 17436 / LMG 22146 / PsJN) (Burkholderia phytofirmans).